Reading from the N-terminus, the 101-residue chain is Small ribosomal subunit protein uS14 (101 aa).

This sequence belongs to the universal ribosomal protein uS14 family. Part of the 30S ribosomal subunit. Contacts proteins S3 and S10.

Functionally, binds 16S rRNA, required for the assembly of 30S particles and may also be responsible for determining the conformation of the 16S rRNA at the A site. The chain is Small ribosomal subunit protein uS14 from Shewanella loihica (strain ATCC BAA-1088 / PV-4).